The sequence spans 146 residues: Large ribosomal subunit protein uL15 (146 aa).

The segment covering 1-13 (MKLHELKPSEGSR) has biased composition (basic and acidic residues). The tract at residues 1 to 57 (MKLHELKPSEGSRKTRNRVGRGIGSGNGKTAGKGHKGQNARSGGGVRPGFEGGQMPL) is disordered. Composition is skewed to gly residues over residues 21–31 (RGIGSGNGKTA) and 42–52 (SGGGVRPGFEG).

It belongs to the universal ribosomal protein uL15 family. As to quaternary structure, part of the 50S ribosomal subunit.

Functionally, binds to the 23S rRNA. This is Large ribosomal subunit protein uL15 from Bacillus subtilis (strain 168).